Consider the following 278-residue polypeptide: HTH-type transcriptional activator RhaS (278 aa).

The HTH araC/xylS-type domain maps to 174 to 272; sequence NLLLAWLEDH…NWSPRDIRQG (99 aa). DNA-binding regions (H-T-H motif) lie at residues 191 to 212 and 239 to 262; these read DAVADQFSLSLRTLHRQLKQQT and VTDIAYRCGFSDSNHFSTLFHREF.

As to quaternary structure, binds DNA as a dimer.

The protein resides in the cytoplasm. Its function is as follows. Activates expression of the rhaBAD and rhaT operons. The polypeptide is HTH-type transcriptional activator RhaS (Shigella boydii serotype 18 (strain CDC 3083-94 / BS512)).